The following is a 201-amino-acid chain: Small ribosomal subunit protein eS1 (201 aa).

The protein belongs to the eukaryotic ribosomal protein eS1 family.

This is Small ribosomal subunit protein eS1 from Methanoregula boonei (strain DSM 21154 / JCM 14090 / 6A8).